The sequence spans 361 residues: MTQPTLFIDRDGTLIDEPKTDFQIDSLEKLKLERNVIPALLKLKDHYRFVMVSNQDGLGTDSFPQENFDKPHNAMLEIFRSQGIEFDAILICPHKPEDNCDCRKPKIKLLKKYIDKKLFDPAHSFVIGDRATDVQLAENLGIQALQYHPEKLDWDLIVEKLLPKTTACKRPPRYAEVVRTTKETDIKVQVWLDETGVNQISTGVGFFDHMLDQIATHGGFRMNVQCKGDLWIDEHHTVEDTALALGTALKQALGDKRGIQRFGFVLPMDECKAECTMDLSGRPYFKFKAKFKREKVGDFSTEMTEHFFQSIAYTLMATLHLKTQGDNDHHKIESLFKVFGRTLRQCIKVEGNELPSSKGVL.

Positions 1 to 172 (MTQPTLFIDR…PKTTACKRPP (172 aa)) are histidinol-phosphatase. Aspartate 9 acts as the Nucleophile in catalysis. Positions 9 and 11 each coordinate Mg(2+). Aspartate 11 serves as the catalytic Proton donor. Residues cysteine 92, histidine 94, cysteine 100, and cysteine 102 each coordinate Zn(2+). Aspartate 129 serves as a coordination point for Mg(2+). Residues 173 to 361 (RYAEVVRTTK…NELPSSKGVL (189 aa)) form an imidazoleglycerol-phosphate dehydratase region.

The protein in the N-terminal section; belongs to the histidinol-phosphatase family. In the C-terminal section; belongs to the imidazoleglycerol-phosphate dehydratase family. Requires Mg(2+) as cofactor. The cofactor is Zn(2+).

Its subcellular location is the cytoplasm. It catalyses the reaction D-erythro-1-(imidazol-4-yl)glycerol 3-phosphate = 3-(imidazol-4-yl)-2-oxopropyl phosphate + H2O. It carries out the reaction L-histidinol phosphate + H2O = L-histidinol + phosphate. It functions in the pathway amino-acid biosynthesis; L-histidine biosynthesis; L-histidine from 5-phospho-alpha-D-ribose 1-diphosphate: step 6/9. It participates in amino-acid biosynthesis; L-histidine biosynthesis; L-histidine from 5-phospho-alpha-D-ribose 1-diphosphate: step 8/9. The chain is Histidine biosynthesis bifunctional protein HisB from Actinobacillus pleuropneumoniae serotype 3 (strain JL03).